A 316-amino-acid polypeptide reads, in one-letter code: Thymidylate synthase (316 aa).

DUMP contacts are provided by residues Arg-23 and 178 to 179; that span reads RR. The active-site Nucleophile is Cys-198. Residues 218–221, Asn-229, and 259–261 contribute to the dUMP site; these read RSAD and HLY. (6R)-5,10-methylene-5,6,7,8-tetrahydrofolate is bound at residue Asp-221. Ala-315 contributes to the (6R)-5,10-methylene-5,6,7,8-tetrahydrofolate binding site.

It belongs to the thymidylate synthase family. Bacterial-type ThyA subfamily. Homodimer.

The protein resides in the cytoplasm. The catalysed reaction is dUMP + (6R)-5,10-methylene-5,6,7,8-tetrahydrofolate = 7,8-dihydrofolate + dTMP. Its pathway is pyrimidine metabolism; dTTP biosynthesis. Its function is as follows. Catalyzes the reductive methylation of 2'-deoxyuridine-5'-monophosphate (dUMP) to 2'-deoxythymidine-5'-monophosphate (dTMP) while utilizing 5,10-methylenetetrahydrofolate (mTHF) as the methyl donor and reductant in the reaction, yielding dihydrofolate (DHF) as a by-product. This enzymatic reaction provides an intracellular de novo source of dTMP, an essential precursor for DNA biosynthesis. The sequence is that of Thymidylate synthase from Lacticaseibacillus paracasei (strain ATCC 334 / BCRC 17002 / CCUG 31169 / CIP 107868 / KCTC 3260 / NRRL B-441) (Lactobacillus paracasei).